The sequence spans 454 residues: Chromosomal replication initiator protein DnaA (454 aa).

The interval 1 to 83 is domain I, interacts with DnaA modulators; sequence MMTDSMRLVW…RPLKVLLEVA (83 aa). The segment at 83–115 is domain II; the sequence is AECVAEAPETPEEAPQQLCLPAFADIPRPSSGR. The segment at 116–333 is domain III, AAA+ region; that stretch reads LLNRDFTFDS…SGIKGLAARN (218 aa). ATP contacts are provided by Gly160, Gly162, Lys163, and Ser164. Residues 334–454 form a domain IV, binds dsDNA region; the sequence is SIMGRGIDLK…LCGKIEAGEF (121 aa).

It belongs to the DnaA family. As to quaternary structure, oligomerizes as a right-handed, spiral filament on DNA at oriC.

The protein localises to the cytoplasm. Its function is as follows. Plays an essential role in the initiation and regulation of chromosomal replication. ATP-DnaA binds to the origin of replication (oriC) to initiate formation of the DNA replication initiation complex once per cell cycle. Binds the DnaA box (a 9 base pair repeat at the origin) and separates the double-stranded (ds)DNA. Forms a right-handed helical filament on oriC DNA; dsDNA binds to the exterior of the filament while single-stranded (ss)DNA is stabiized in the filament's interior. The ATP-DnaA-oriC complex binds and stabilizes one strand of the AT-rich DNA unwinding element (DUE), permitting loading of DNA polymerase. After initiation quickly degrades to an ADP-DnaA complex that is not apt for DNA replication. Binds acidic phospholipids. In Desulfatibacillum aliphaticivorans, this protein is Chromosomal replication initiator protein DnaA.